The following is a 97-amino-acid chain: Biogenesis of lysosome-related organelles complex 1 subunit SNN1 (97 aa).

A coiled-coil region spans residues 45–97 (VVRLKQIRNLLKEEQEYYNEEEGLGVERERLEELELRVEKLTQKYKKLLADCV).

It belongs to the SNAPIN family. In terms of assembly, component of the biogenesis of lysosome-related organelles complex-1 (BLOC-1).

Its subcellular location is the endosome. Functionally, component of the biogenesis of lysosome-related organelles complex-1 (BLOC-1), a complex involved in endosomal cargo sorting. This is Biogenesis of lysosome-related organelles complex 1 subunit SNN1 (SNN1) from Lachancea thermotolerans (strain ATCC 56472 / CBS 6340 / NRRL Y-8284) (Yeast).